A 296-amino-acid chain; its full sequence is Polyamine aminopropyltransferase (296 aa).

The 234-residue stretch at 5 to 238 folds into the PABS domain; the sequence is ELWYETLHAN…GIMTFAWATQ (234 aa). Glutamine 33 is an S-methyl-5'-thioadenosine binding site. 2 residues coordinate spermidine: histidine 64 and aspartate 88. Residues glutamate 108 and 140 to 141 each bind S-methyl-5'-thioadenosine; that span reads DG. The active-site Proton acceptor is aspartate 158. Position 158–161 (158–161) interacts with spermidine; that stretch reads DCTD. Proline 165 is a binding site for S-methyl-5'-thioadenosine.

Belongs to the spermidine/spermine synthase family. In terms of assembly, homodimer or homotetramer.

The protein resides in the cytoplasm. The catalysed reaction is S-adenosyl 3-(methylsulfanyl)propylamine + putrescine = S-methyl-5'-thioadenosine + spermidine + H(+). Its pathway is amine and polyamine biosynthesis; spermidine biosynthesis; spermidine from putrescine: step 1/1. Catalyzes the irreversible transfer of a propylamine group from the amino donor S-adenosylmethioninamine (decarboxy-AdoMet) to putrescine (1,4-diaminobutane) to yield spermidine. The chain is Polyamine aminopropyltransferase from Yersinia pseudotuberculosis serotype O:3 (strain YPIII).